The sequence spans 194 residues: A-type ATP synthase subunit E (194 aa).

It belongs to the V-ATPase E subunit family. As to quaternary structure, has multiple subunits with at least A(3), B(3), C, D, E, F, H, I and proteolipid K(x).

Its subcellular location is the cell membrane. Its function is as follows. Component of the A-type ATP synthase that produces ATP from ADP in the presence of a proton gradient across the membrane. The chain is A-type ATP synthase subunit E from Haloferax volcanii (strain ATCC 29605 / DSM 3757 / JCM 8879 / NBRC 14742 / NCIMB 2012 / VKM B-1768 / DS2) (Halobacterium volcanii).